The chain runs to 595 residues: Glutamyl-tRNA(Gln) amidotransferase subunit B, mitochondrial (595 aa).

The transit peptide at 1–72 directs the protein to the mitochondrion; sequence MPRLWYSRYL…RAKSQSRNGR (72 aa).

Belongs to the GatB/GatE family. GatB subfamily. Subunit of the heterotrimeric GatCAB amidotransferase (AdT) complex, composed of A, B and C subunits.

Its subcellular location is the mitochondrion. It carries out the reaction L-glutamyl-tRNA(Gln) + L-glutamine + ATP + H2O = L-glutaminyl-tRNA(Gln) + L-glutamate + ADP + phosphate + H(+). Its function is as follows. Allows the formation of correctly charged Gln-tRNA(Gln) through the transamidation of misacylated Glu-tRNA(Gln) in the mitochondria. The reaction takes place in the presence of glutamine and ATP through an activated gamma-phospho-Glu-tRNA(Gln). The chain is Glutamyl-tRNA(Gln) amidotransferase subunit B, mitochondrial from Talaromyces marneffei (strain ATCC 18224 / CBS 334.59 / QM 7333) (Penicillium marneffei).